Consider the following 417-residue polypeptide: SNF1 protein kinase subunit beta-3 (417 aa).

Over residues 1–12 (MAGDNPENKDAS) the composition is skewed to basic and acidic residues. The tract at residues 1 to 37 (MAGDNPENKDASMLDVSDAASNTTINGKHSADSTNEA) is disordered. Phosphoserine is present on residues serine 12, serine 21, serine 44, and serine 135. Polar residues predominate over residues 19-37 (AASNTTINGKHSADSTNEA). Disordered regions lie at residues 64 to 155 (SSLI…VEGK) and 250 to 269 (GNEPQQHLAEKKANHVDDSK). Positions 118–136 (TGNTLQKMDYQPSQQPDSL) are enriched in polar residues. The span at 137 to 149 (QNQGFQQQQEQQQ) shows a compositional bias: low complexity. The interval 152–342 (VEGKKGRAMM…DQQQNNHQNM (191 aa)) is kinase-interacting sequence (KIS); required for interaction with SNF1. Residues 257-269 (LAEKKANHVDDSK) show a composition bias toward basic and acidic residues. A phosphoserine mark is found at serine 276 and serine 279. An association with SNF1 kinase complex (ASC) domain; required for interaction with SNF4 region spans residues 343–417 (AWLTPPQLPP…VTQILYTPLQ (75 aa)).

Belongs to the 5'-AMP-activated protein kinase beta subunit family. As to quaternary structure, component of the SNF1 kinase complex, a heterotrimeric complex composed of the catalytic alpha subunit SNF1, one of the three related beta subunits SIP1, SIP2 or GAL83, and the regulatory gamma subunit SNF4. The beta subunit serves as a bridge between the catalytic and the regulatory subunit. Interacts (via KIS domain) with SNF1. Interacts (via ASC domain) with SNF4. Interacts with REE1. Phosphorylated by SNF1 in vitro.

The protein resides in the cytoplasm. It is found in the nucleus. Its function is as follows. Beta subunit of the SNF1 kinase complex, which is required for transcriptional, metabolic, and developmental adaptations in response to glucose limitation. Has a structural role, mediating heterotrimer formation, and a regulatory role, defining carbon source-regulated subcellular location and substrate specificity of the SNF1 kinase complex. Promotes the relocalization of the SNF1 kinase complex to the nucleus upon shift to nonfermentable carbon sources. The chain is SNF1 protein kinase subunit beta-3 (GAL83) from Saccharomyces cerevisiae (strain ATCC 204508 / S288c) (Baker's yeast).